A 649-amino-acid polypeptide reads, in one-letter code: Acetylcholinesterase (649 aa).

Positions 1–38 are cleaved as a signal peptide; that stretch reads MAISCRQSRVLPMSLPLPLTIPLPLVLVLSLHLSGVCG. Cys-104 and Cys-131 form a disulfide bridge. 2 N-linked (GlcNAc...) asparagine glycosylation sites follow: Asn-126 and Asn-174. Ser-276 (acyl-ester intermediate) is an active-site residue. An intrachain disulfide couples Cys-330 to Cys-345. An N-linked (GlcNAc...) asparagine glycan is attached at Asn-331. Residues Glu-405 and His-518 each act as charge relay system in the active site. Cys-480 and Cys-598 are oxidised to a cystine. Asn-531 carries N-linked (GlcNAc...) asparagine glycosylation. Ser-619 carries GPI-anchor amidated serine lipidation. A propeptide spans 620-649 (removed in mature form); that stretch reads GSASISPRLQLLGIAALIYICAALRTKRVF.

This sequence belongs to the type-B carboxylesterase/lipase family. As to quaternary structure, homodimer; disulfide-linked. The active unit is formed by non-covalent association of the 55 kDa and 16 kDa subunits. Post-translationally, proteolytic cleavage into the 16 kDa subunit and the 55 kDa subunits originates from the hydrophilic peptide, aa 148-180, and is associated with excretion out of the cell. Neither N-glycosylation nor dimerization is required for enzyme activity or substrate specificity, but protects the protein against proteolytic digestion.

Its subcellular location is the synapse. It localises to the cell membrane. It catalyses the reaction acetylcholine + H2O = choline + acetate + H(+). Its function is as follows. Rapidly hydrolyzes choline released into the synapse. It can hydrolyze butyrylthiocholine. The polypeptide is Acetylcholinesterase (Ace) (Drosophila melanogaster (Fruit fly)).